The sequence spans 308 residues: Uridine diphosphate glucose pyrophosphatase NUDT22 (308 aa).

Residues phenylalanine 56, tyrosine 86, arginine 138, alanine 143, aspartate 150, histidine 155, and glutamate 157 each coordinate substrate. Residues 117 to 284 (ADPLGVGAAL…KGAILLYNRH (168 aa)) enclose the Nudix hydrolase domain. The short motif at 174 to 195 (GLLVVRELFSSVLQEICDEVNL) is the Nudix box element. Glutamate 188 and glutamate 192 together coordinate Mg(2+). Serine 273 lines the substrate pocket.

Belongs to the Nudix hydrolase family. Requires Mg(2+) as cofactor.

The enzyme catalyses UDP-sugar + H2O = UMP + alpha-D-aldose 1-phosphate.. In terms of biological role, hydrolyzes UDP-glucose to glucose 1-phosphate and UMP and UDP-galactose to galactose 1-phosphate and UMP. Preferred substrate is UDP-glucose. In Mus musculus (Mouse), this protein is Uridine diphosphate glucose pyrophosphatase NUDT22 (Nudt22).